The primary structure comprises 185 residues: Elongation factor P (185 aa).

Belongs to the elongation factor P family.

It is found in the cytoplasm. It participates in protein biosynthesis; polypeptide chain elongation. In terms of biological role, involved in peptide bond synthesis. Stimulates efficient translation and peptide-bond synthesis on native or reconstituted 70S ribosomes in vitro. Probably functions indirectly by altering the affinity of the ribosome for aminoacyl-tRNA, thus increasing their reactivity as acceptors for peptidyl transferase. This chain is Elongation factor P, found in Fervidobacterium nodosum (strain ATCC 35602 / DSM 5306 / Rt17-B1).